Reading from the N-terminus, the 416-residue chain is MTLKTIRGKALMGAALCATMLTFSGQAFADAELKIFVSSQHQPDIWRKALDQYEAKTPGVKVVIETGGNTSEMQAQYLNTVMSAKDSSLDVLMLDVIRPAQFATAGWTSDFSGKDLSAYLPTYAEANTVNGKIVALPAFADSMFLYYRKDLLDKYGIKPPTTWDELKEASKKVMEGEKNPELQGLSFQGKAIEGAVCTFLLPYWSEGKSLVENGKLNFDNKAAVDSLKLWKSFVDDGISKKNISEVATDDTRKEFQAGKVLFAVNWSYAWTHFQGKESQVNDKVGVARLPAVKGGEQTTCLGGWEFGVSAYSKQQDEAKKLVEYLSSQDVSKFMAINAALLPTYAALYKDADVTKTIPWFADALPVVETAKARPVTPRYNEVSETIRTTVNGVLAGVMTPEDGAKQMESRLRRVLR.

The signal sequence occupies residues 1 to 29 (MTLKTIRGKALMGAALCATMLTFSGQAFA). Position 40 (Gln40) interacts with 3-(6-sulfo-alpha-D-quinovosyl)glycerol. Residue His41 participates in 6-sulfo-D-quinovose binding. 8 residues coordinate 3-(6-sulfo-alpha-D-quinovosyl)glycerol: Ser71, Asp95, Asp141, Gly194, Thr248, Gly303, Trp304, and Arg373. 3 residues coordinate 6-sulfo-D-quinovose: Gly303, Trp304, and Arg373.

This sequence belongs to the bacterial solute-binding protein 1 family. The complex is probably composed of two ATP-binding proteins (SmoE), two transmembrane proteins (SmoG and SmoH) and a solute-binding protein (SmoF).

It is found in the periplasm. In terms of biological role, part of the ABC transporter complex SmoEFGH involved in sulfoquinovosyl glycerol (SQGro) uptake. Binds sulfoquinovosyl glycerol (SQGro). Can also bind sulfoquinovose (SQ), methyl alpha-sulfoquinovoside (SQMe) and a short-chain derivative of sulfoquinovosyl diacylglycerol (SQDG). Cannot bind D-glucose and D-glucuronic acid. This chain is Sulfoquinovosyl glycerol-binding protein SmoF, found in Agrobacterium fabrum (strain C58 / ATCC 33970) (Agrobacterium tumefaciens (strain C58)).